Reading from the N-terminus, the 220-residue chain is ATP phosphoribosyltransferase (220 aa).

It belongs to the ATP phosphoribosyltransferase family. Short subfamily. Heteromultimer composed of HisG and HisZ subunits.

Its subcellular location is the cytoplasm. The enzyme catalyses 1-(5-phospho-beta-D-ribosyl)-ATP + diphosphate = 5-phospho-alpha-D-ribose 1-diphosphate + ATP. The protein operates within amino-acid biosynthesis; L-histidine biosynthesis; L-histidine from 5-phospho-alpha-D-ribose 1-diphosphate: step 1/9. Its function is as follows. Catalyzes the condensation of ATP and 5-phosphoribose 1-diphosphate to form N'-(5'-phosphoribosyl)-ATP (PR-ATP). Has a crucial role in the pathway because the rate of histidine biosynthesis seems to be controlled primarily by regulation of HisG enzymatic activity. The protein is ATP phosphoribosyltransferase of Anaeromyxobacter sp. (strain Fw109-5).